The following is a 992-amino-acid chain: RNA-binding motif protein, X-linked-like-3 (992 aa).

The RRM domain maps to 8–86; that stretch reads EKLFVGGLNL…KAIMVAQTIK (79 aa). 7 disordered regions span residues 91–130, 144–169, 188–207, 278–385, 397–511, 562–588, and 644–992; these read SSRW…PDDG, APMP…DPGD, PDYC…GRDH, DHLP…DSSS, EEYQ…HRYR, SLDA…SHRY, and NSGG…QSRY. The span at 284–296 shows a compositional bias: low complexity; it reads YSGGRSSSSNSYS. Over residues 297 to 316 the composition is skewed to basic and acidic residues; the sequence is RSDRYGEEGCYEEYRGRSPD. Residues 318 to 334 are compositionally biased toward low complexity; the sequence is HSGGRNSSSNSYGQSHH. The span at 335-371 shows a compositional bias: basic and acidic residues; that stretch reads YGGEGRYEEYRGRYEEYRGRSHEARSGGRSTDAHSGG. Positions 454–471 are enriched in low complexity; that stretch reads THSGGRSSSSNSYGQSHR. The segment covering 472–488 has biased composition (basic and acidic residues); it reads YGGEGHYEYRGRSHDAH. 3 stretches are compositionally biased toward polar residues: residues 564-574, 644-664, and 752-774; these read DANSGGRSPNA, NSGG…SQSH, and DANS…SNSY. The span at 785–798 shows a compositional bias: basic and acidic residues; sequence HYEEYRGRSHDTHS. Polar residues predominate over residues 818 to 828; it reads GRNSFSNSYGQ. Basic and acidic residues-rich tracts occupy residues 831 to 842, 920 to 948, and 981 to 992; these read HYGRGGRYEEYQ, SGDH…RPDR, and GRFERGEGQSRY.

The sequence is that of RNA-binding motif protein, X-linked-like-3 (RBMXL3) from Pan troglodytes (Chimpanzee).